The sequence spans 477 residues: Inositol phosphosphingolipids phospholipase C (477 aa).

At 1-398 (MYNRKDRDVH…QRQKFFRGLH (398 aa)) the chain is on the cytoplasmic side. Glu-100 is a binding site for Mg(2+). Catalysis depends on His-334, which acts as the Proton acceptor. The chain crosses the membrane as a helical span at residues 399-417 (FWASILLLIASLVVTTFTA). The Mitochondrial intermembrane segment spans residues 418 to 424 (NKAGWSS). A helical transmembrane segment spans residues 425-449 (IFWVLFAIAVSISGTIDGAISFLFG). Residues 450–477 (RSEIRALIEVEQEVLDAEHHLQTFLSEK) are Cytoplasmic-facing.

It belongs to the neutral sphingomyelinase family. Mg(2+) serves as cofactor.

It is found in the endoplasmic reticulum membrane. It localises to the mitochondrion outer membrane. The catalysed reaction is an N-acyl-(4R)-4-hydroxysphinganine-1-phosphoinositol + H2O = 1D-myo-inositol 1-phosphate + an N-acyl-(4R)-4-hydroxysphinganine + H(+). It catalyses the reaction a mannosylinositol-1-phospho-N-acyl-sphingoid base + H2O = mannosylinositol-1-phosphate + an N-acyl-sphingoid base + H(+). It carries out the reaction an inositol phosphomannosylinositol-1-phospho-N-acyl-(4R)-4-hydroxysphinganine + H2O = mannosyldiinositol-1-phosphate + an N-acyl-(4R)-4-hydroxysphinganine + H(+). It participates in lipid metabolism; sphingolipid metabolism. Its activity is regulated as follows. Activated through localization to mitochondria in specific growth phases. Responsible for the hydrolysis of the phosphosphingolipids (IPS), inositol phosphorylceramide (IPC), mannosylinositol phosphorylceramide (MIPC), and mannosyldiinositol phosphorylceramide (M(IP)2C). Regulates sphingolipid metabolism in mitochondria, especially the formation of alpha-hydroxylated very long chain phytoceramides. The generated ceramides contribute to the normal function of mitochondria. Also active on sphingomyelin (SM), but this activity is probably not physiologically relevant. The polypeptide is Inositol phosphosphingolipids phospholipase C (Saccharomyces cerevisiae (strain ATCC 204508 / S288c) (Baker's yeast)).